A 135-amino-acid polypeptide reads, in one-letter code: U-myrmeciitoxin(01)-Mg7a (135 aa).

Residues 1–21 (MKLSCLSLALAIILLLAIVHS) form the signal peptide. A propeptide spanning residues 22–72 (PNMEVKALAGPEADAIGFADAFGEADAFGEADAFGEADAFGEADAFGEADA) is cleaved from the precursor. The interval 69 to 95 (EADAKRSKSSSKTKPKKPKKPKKKIKI) is disordered. Residues 75–93 (SKSSSKTKPKKPKKPKKKI) are compositionally biased toward basic residues. The O-linked (GalNAc...) serine glycan is linked to S120. 2 O-linked (GalNAc...) threonine glycosylation sites follow: T129 and T130.

Belongs to the formicidae venom precursor-01 superfamily. Post-translationally, glycosylation is critical to maintaining the aqueous solubility of this protein, but does not directly contribute to its activity. In terms of tissue distribution, expressed by the venom gland.

The protein resides in the secreted. The protein localises to the target cell membrane. Neurotoxin that triggers pain behavior and inflammation in mammals, and is paralytic and lethal to insects. Causes a time-dependent increase in cell leak current. May act by targeting membranes. This chain is U-myrmeciitoxin(01)-Mg7a, found in Myrmecia gulosa (Red bulldog ant).